A 313-amino-acid chain; its full sequence is Cilia- and flagella-associated protein 36 (313 aa).

Phosphoserine is present on residues serine 85 and serine 147. Residues 147–187 adopt a coiled-coil conformation; that stretch reads SDLEQEEMKILKEVLRKSKEEYDQEEERKRKKQLSEAKTEE. 2 disordered regions span residues 165 to 204 and 262 to 292; these read KEEY…SQGD and KIKQ…TAEE. Residues 179 to 189 are compositionally biased toward basic and acidic residues; that stretch reads QLSEAKTEEHP. Over residues 192–203 the composition is skewed to polar residues; sequence ANETAKMSNSQG. Position 201 is a phosphoserine (serine 201). A compositionally biased stretch (basic and acidic residues) spans 271–292; sequence QKGKPAGEVEEMTEKPEMTAEE.

This sequence belongs to the CFAP36 family. As to quaternary structure, interacts with ARL3.

It localises to the nucleus. The protein resides in the cytoplasm. It is found in the cell projection. Its subcellular location is the cilium. The protein localises to the flagellum. Its function is as follows. May act as an effector for ARL3. This is Cilia- and flagella-associated protein 36 from Bos taurus (Bovine).